Reading from the N-terminus, the 195-residue chain is Glucagon family neuropeptides (195 aa).

The signal sequence occupies residues methionine 1–tyrosine 20. A propeptide spanning residues serine 21–threonine 82 is cleaved from the precursor. Residues valine 113 to aspartate 132 are disordered. The segment covering glutamate 115–glutamate 124 has biased composition (acidic residues). The residue at position 167 (lysine 167) is a Lysine amide. A propeptide spanning residues leucine 171–tyrosine 195 is cleaved from the precursor.

This sequence belongs to the glucagon family. Brain, testis, ovary and stomach. Not pancreas, pituitary, muscle and liver.

It localises to the secreted. Functionally, primary role of GHRH is to release GH from the pituitary. Its function is as follows. PACAP plays pivotal roles as a neurotransmitter and/or a neuromodulator. The polypeptide is Glucagon family neuropeptides (Clarias macrocephalus (Bighead catfish)).